The primary structure comprises 417 residues: NADH-quinone oxidoreductase subunit D (417 aa).

Belongs to the complex I 49 kDa subunit family. NDH-1 is composed of 14 different subunits. Subunits NuoB, C, D, E, F, and G constitute the peripheral sector of the complex.

It is found in the cell inner membrane. The enzyme catalyses a quinone + NADH + 5 H(+)(in) = a quinol + NAD(+) + 4 H(+)(out). Functionally, NDH-1 shuttles electrons from NADH, via FMN and iron-sulfur (Fe-S) centers, to quinones in the respiratory chain. The immediate electron acceptor for the enzyme in this species is believed to be ubiquinone. Couples the redox reaction to proton translocation (for every two electrons transferred, four hydrogen ions are translocated across the cytoplasmic membrane), and thus conserves the redox energy in a proton gradient. This Ruthia magnifica subsp. Calyptogena magnifica protein is NADH-quinone oxidoreductase subunit D.